We begin with the raw amino-acid sequence, 99 residues long: Integration host factor subunit beta (99 aa).

The protein belongs to the bacterial histone-like protein family. In terms of assembly, heterodimer of an alpha and a beta chain.

Functionally, this protein is one of the two subunits of integration host factor, a specific DNA-binding protein that functions in genetic recombination as well as in transcriptional and translational control. The protein is Integration host factor subunit beta of Rhizobium etli (strain CIAT 652).